The primary structure comprises 253 residues: MATSQQFLNPTLFKSLASSNKNSCTLCPSPFLQLKSASTIFNYKPLTSSSATIITRVAASSSDSGESITRETFHGLCFVLKDNIDTDQIIPAEYGTLIPSIPEDREKLGSFALNGLPKFYNERFVVPGEMKSKYSVIIGGDNFGCGSSREHAPVCLGAAGAKAVVAESYARIFFRNCVATGEIFPLESEVRICDECKTGDVVTIEHKEDGSSLLINHTTRKEYKLKPLGDAGPVIDAGGIFAYARKAGMIPSA.

A chloroplast-targeting transit peptide spans methionine 1 to arginine 56.

The protein belongs to the LeuD family. In terms of assembly, heterodimer of the large LEUC/IIL1 subunit and the small LEUD (SSU1, SSU2 or SSU3) subunits. As to expression, expressed in vascular bundles of roots, cotyledons and rosette leaves. Expressed in stem vascular bundles which branche off into lateral inflorescences. Expressed in connective tissues in anthers. In hypocotyls, expressed in parenchyma cells surrounding the vasculature. In rosette leaves, expressed in phloem cells and cells close to the xylem along the vascular bundles. In roots of adult plants, expressed in cells closely associated with the stele. In flowering stalks, expressed in parenchyma cells associated with the phloem or the xylem.

It localises to the plastid. Its subcellular location is the chloroplast stroma. It carries out the reaction (2R,3S)-3-isopropylmalate = (2S)-2-isopropylmalate. The catalysed reaction is a 2-(omega-methylsulfanyl)alkylmalate = a 2-(omega-methylsulfanyl)alkylmaleate + H2O. It catalyses the reaction 2-(3-methylsulfanyl)propylmalate = 2-(2-methylsulfanyl)propylmaleate + H2O. The enzyme catalyses a 3-(omega-methylsulfanyl)alkylmalate = a 2-(omega-methylsulfanyl)alkylmaleate + H2O. It carries out the reaction 2-(2-methylsulfanyl)ethylmalate = 2-(2-methylsulfanyl)ethylmaleate + H2O. The catalysed reaction is 3-(2-methylsulfanyl)ethylmalate = 2-(2-methylsulfanyl)ethylmaleate + H2O. It catalyses the reaction 3-(3-methylsulfanyl)propylmalate = 2-(2-methylsulfanyl)propylmaleate + H2O. Its pathway is amino-acid biosynthesis; L-leucine biosynthesis; L-leucine from 3-methyl-2-oxobutanoate: step 2/4. In terms of biological role, catalyzes the isomerization between 2-isopropylmalate and 3-isopropylmalate, via the formation of 2-isopropylmaleate. Functions redundantly with LEUD1 in the methionine chain elongation pathway of aliphatic glucosinolate formation. The polypeptide is 3-isopropylmalate dehydratase small subunit 3 (Arabidopsis thaliana (Mouse-ear cress)).